The chain runs to 454 residues: Anthocyanidin 3-O-galactosyltransferase 3GT6 (454 aa).

Positions 1 to 21 (MTNSSKGRHVAVLPFPFSTHA) are cleaved as a signal peptide. Residues S18 and H20 each coordinate an anthocyanidin. Residue H20 is the Proton acceptor of the active site. The Charge relay role is filled by D117. H148 is an an anthocyanidin binding site. A331, Q333, H348, W351, N352, S353, and E356 together coordinate UDP-alpha-D-glucose. Position 371 (G371) interacts with an anthocyanidin. D372 is a UDP-alpha-D-glucose binding site. The N-linked (GlcNAc...) asparagine glycan is linked to N441.

The protein belongs to the UDP-glycosyltransferase family. Monomer. In terms of tissue distribution, mostly expressed in leaves and flowers and, to a lower extent, in roots. In flowers, mainly observed in petals, stamens and scapes, and at lower levels in pistils and toruses.

The catalysed reaction is cyanidin + UDP-alpha-D-galactose = cyanidin 3-O-beta-D-galactoside + UDP + H(+). The enzyme catalyses cyanidin + UDP-alpha-D-glucose = cyanidin 3-O-beta-D-glucoside + UDP + H(+). It carries out the reaction delphinidin + UDP-alpha-D-glucose = delphinidin 3-O-beta-D-glucoside + UDP. It catalyses the reaction peonidin + UDP-alpha-D-glucose = peonidin 3-O-beta-D-glucoside + UDP. The catalysed reaction is pelargonidin + UDP-alpha-D-glucose = pelargonidin 3-O-beta-D-glucoside + UDP. The enzyme catalyses delphinidin + UDP-alpha-D-galactose = delphinidin 3-O-beta-D-galactoside + UDP + H(+). It carries out the reaction pelargonidin + UDP-alpha-D-galactose = pelargonidin 3-O-beta-D-galactoside betaine + UDP. It catalyses the reaction peonidin + UDP-alpha-D-galactose = peonidin 3-O-beta-D-galactoside + UDP. The catalysed reaction is petunidin + UDP-alpha-D-galactose = petunidin 3-O-beta-D-galactoside + UDP. The enzyme catalyses petunidin + UDP-alpha-D-glucose = petunidin 3-O-beta-D-glucoside + UDP. It carries out the reaction an anthocyanidin + UDP-alpha-D-glucose + H(+) = an anthocyanidin 3-O-beta-D-glucoside + UDP. It catalyses the reaction an anthocyanidin + UDP-alpha-D-galactose = an anthocyanidin 3-O-beta-D-galactoside + UDP. Its pathway is pigment biosynthesis; anthocyanin biosynthesis. In terms of biological role, flavonoid 3-O-glycosyltransferase involved in the biosynthesis of anthocyanins conferring flower red/pink colors, mainly anthocyanidin 3-O-glycosides. Catalyzes the addition of UDP-sugar to the 3-OH of anthocyanidin, with a preference for UDP-galactose (UDP-Gal) as sugar donor and cyanidin as substrate; able to use delphinidin, pelargonidin, peonidin and petunidin as substrates in the presence of UDP-Gal, but barely active on malvidin. Can also use UDP-glucose (UDP-Glu) as sugar donor with cyanidin, delphinidin, pelargonidin, peonidin and petunidin as substrates, but not active on malvidin. The polypeptide is Anthocyanidin 3-O-galactosyltransferase 3GT6 (Rhododendron delavayi (Rhododendron)).